A 572-amino-acid chain; its full sequence is Phenylalanine--tRNA ligase beta subunit (572 aa).

Residues 285–363 form the B5 domain; it reads LSTTTKTVSH…RAFGFNELEP (79 aa). Asp-341, Asp-347, Asp-350, and Asp-351 together coordinate Mg(2+).

This sequence belongs to the phenylalanyl-tRNA synthetase beta subunit family. Type 2 subfamily. In terms of assembly, tetramer of two alpha and two beta subunits. The cofactor is Mg(2+).

It is found in the cytoplasm. The enzyme catalyses tRNA(Phe) + L-phenylalanine + ATP = L-phenylalanyl-tRNA(Phe) + AMP + diphosphate + H(+). The chain is Phenylalanine--tRNA ligase beta subunit from Natronomonas pharaonis (strain ATCC 35678 / DSM 2160 / CIP 103997 / JCM 8858 / NBRC 14720 / NCIMB 2260 / Gabara) (Halobacterium pharaonis).